The following is a 429-amino-acid chain: Serine hydroxymethyltransferase (429 aa).

(6S)-5,6,7,8-tetrahydrofolate is bound by residues Leu-128 and 132 to 134 (GHL). Residue Lys-237 is modified to N6-(pyridoxal phosphate)lysine.

It belongs to the SHMT family. As to quaternary structure, homodimer. Pyridoxal 5'-phosphate serves as cofactor.

Its subcellular location is the cytoplasm. It catalyses the reaction (6R)-5,10-methylene-5,6,7,8-tetrahydrofolate + glycine + H2O = (6S)-5,6,7,8-tetrahydrofolate + L-serine. It functions in the pathway one-carbon metabolism; tetrahydrofolate interconversion. Its pathway is amino-acid biosynthesis; glycine biosynthesis; glycine from L-serine: step 1/1. Catalyzes the reversible interconversion of serine and glycine with tetrahydrofolate (THF) serving as the one-carbon carrier. This reaction serves as the major source of one-carbon groups required for the biosynthesis of purines, thymidylate, methionine, and other important biomolecules. Also exhibits THF-independent aldolase activity toward beta-hydroxyamino acids, producing glycine and aldehydes, via a retro-aldol mechanism. This is Serine hydroxymethyltransferase from Caulobacter vibrioides (strain ATCC 19089 / CIP 103742 / CB 15) (Caulobacter crescentus).